The chain runs to 225 residues: Thylakoid lumenal 17.9 kDa protein, chloroplastic (225 aa).

It localises to the plastid. It is found in the chloroplast thylakoid lumen. This chain is Thylakoid lumenal 17.9 kDa protein, chloroplastic, found in Arabidopsis thaliana (Mouse-ear cress).